We begin with the raw amino-acid sequence, 325 residues long: MIPAVSLGDPQFTANVHDGIARITELINSELSQADEVMRDTVAHLVDAGGTPFRPLFTVLAAQLGSDPDGWEVTVAGAAIELMHLGTLCHDRVVDESDMSRKTPSDNTRWTNNFAILAGDYRFATASQLASRLDPEAFAVVAEAFAELITGQMRATRGPASHIDTIEHYLRVVHEKTGSLIAASGQLGAALSGAAEEQIRRVARLGRMIGAAFEISRDIIAISGDSATLSGADLGQAVHTLPMLYALREQTPDTSRLRELLAGPIHDDHVAEALTLLRCSPGIGKAKNVVAAYAAQAREELPYLPDRQPRRALATLIDHAISACD.

Residues Arg54 and His84 each coordinate isopentenyl diphosphate. Mg(2+)-binding residues include Asp91 and Asp95. Positions 91–95 (DRVVD) match the DDXXD motif motif. Arg101 is a binding site for isopentenyl diphosphate. Positions 217–221 (RDIIA) match the DDXXD motif motif.

It belongs to the FPP/GGPP synthase family. It depends on Mg(2+) as a cofactor.

The catalysed reaction is isopentenyl diphosphate + dimethylallyl diphosphate = (2E)-geranyl diphosphate + diphosphate. It functions in the pathway isoprenoid biosynthesis; geranyl diphosphate biosynthesis; geranyl diphosphate from dimethylallyl diphosphate and isopentenyl diphosphate: step 1/1. Functionally, catalyzes the addition of isopentenyl diphosphate (IPP) onto dimethylallyl diphosphate (DMAPP) to form geranyl pyrophosphate (GPP). Is probably involved in the biosynthesis of decaprenyl diphosphate, which is required for mycobacterial cell wall synthesis. Could be required for host endothelial-cell invasion and/or intracellular survival. In Mycobacterium tuberculosis (strain ATCC 25618 / H37Rv), this protein is Dimethylallyltranstransferase.